Here is a 269-residue protein sequence, read N- to C-terminus: 4-hydroxy-tetrahydrodipicolinate reductase (269 aa).

An NAD(+)-binding site is contributed by 11–16; the sequence is GPIGRM. NADP(+) is bound at residue K39. NAD(+) contacts are provided by residues 101-103 and 125-128; these read GTT and ASNF. H158 serves as the catalytic Proton donor/acceptor. Residue H159 coordinates (S)-2,3,4,5-tetrahydrodipicolinate. The active-site Proton donor is the K162. 168–169 is a (S)-2,3,4,5-tetrahydrodipicolinate binding site; it reads GT.

This sequence belongs to the DapB family. In terms of assembly, homotetramer.

It localises to the cytoplasm. The catalysed reaction is (S)-2,3,4,5-tetrahydrodipicolinate + NAD(+) + H2O = (2S,4S)-4-hydroxy-2,3,4,5-tetrahydrodipicolinate + NADH + H(+). The enzyme catalyses (S)-2,3,4,5-tetrahydrodipicolinate + NADP(+) + H2O = (2S,4S)-4-hydroxy-2,3,4,5-tetrahydrodipicolinate + NADPH + H(+). It functions in the pathway amino-acid biosynthesis; L-lysine biosynthesis via DAP pathway; (S)-tetrahydrodipicolinate from L-aspartate: step 4/4. Functionally, catalyzes the conversion of 4-hydroxy-tetrahydrodipicolinate (HTPA) to tetrahydrodipicolinate. This chain is 4-hydroxy-tetrahydrodipicolinate reductase, found in Buchnera aphidicola subsp. Acyrthosiphon pisum (strain Tuc7).